The sequence spans 392 residues: Probable tRNA sulfurtransferase (392 aa).

Positions 63–169 (GRAADAAADT…DAEAFVFLTH (107 aa)) constitute a THUMP domain. ATP is bound by residues 187-188 (LV), Arg270, Gly292, and Gln301.

This sequence belongs to the ThiI family.

The protein resides in the cytoplasm. It carries out the reaction [ThiI sulfur-carrier protein]-S-sulfanyl-L-cysteine + a uridine in tRNA + 2 reduced [2Fe-2S]-[ferredoxin] + ATP + H(+) = [ThiI sulfur-carrier protein]-L-cysteine + a 4-thiouridine in tRNA + 2 oxidized [2Fe-2S]-[ferredoxin] + AMP + diphosphate. The catalysed reaction is [ThiS sulfur-carrier protein]-C-terminal Gly-Gly-AMP + S-sulfanyl-L-cysteinyl-[cysteine desulfurase] + AH2 = [ThiS sulfur-carrier protein]-C-terminal-Gly-aminoethanethioate + L-cysteinyl-[cysteine desulfurase] + A + AMP + 2 H(+). Its pathway is cofactor biosynthesis; thiamine diphosphate biosynthesis. Its function is as follows. Catalyzes the ATP-dependent transfer of a sulfur to tRNA to produce 4-thiouridine in position 8 of tRNAs, which functions as a near-UV photosensor. Also catalyzes the transfer of sulfur to the sulfur carrier protein ThiS, forming ThiS-thiocarboxylate. This is a step in the synthesis of thiazole, in the thiamine biosynthesis pathway. The sulfur is donated as persulfide by IscS. This chain is Probable tRNA sulfurtransferase, found in Halobacterium salinarum (strain ATCC 29341 / DSM 671 / R1).